The chain runs to 283 residues: Acetylglutamate kinase (283 aa).

Substrate is bound by residues 63–64 (GG), Arg-85, and Asn-178.

This sequence belongs to the acetylglutamate kinase family. ArgB subfamily.

The protein resides in the cytoplasm. It catalyses the reaction N-acetyl-L-glutamate + ATP = N-acetyl-L-glutamyl 5-phosphate + ADP. The protein operates within amino-acid biosynthesis; L-arginine biosynthesis; N(2)-acetyl-L-ornithine from L-glutamate: step 2/4. Its function is as follows. Catalyzes the ATP-dependent phosphorylation of N-acetyl-L-glutamate. This Prochlorococcus marinus (strain MIT 9215) protein is Acetylglutamate kinase.